The sequence spans 182 residues: Large ribosomal subunit protein uL6 (182 aa).

Belongs to the universal ribosomal protein uL6 family. In terms of assembly, part of the 50S ribosomal subunit.

Its function is as follows. This protein binds to the 23S rRNA, and is important in its secondary structure. It is located near the subunit interface in the base of the L7/L12 stalk, and near the tRNA binding site of the peptidyltransferase center. This Dehalococcoides mccartyi (strain CBDB1) protein is Large ribosomal subunit protein uL6.